Consider the following 218-residue polypeptide: MSSGAASGTGRGRPRGGGPGPGDPPPSETHKLVVVGGGGVGKSALTIQFIQSYFVSDYDPTIEDSYTKICSVDGIPARLDILDTAGQEEFGAMREQYMRAGHGFLLVFAINDRQSFNEVGKLFTQILRVKDRDDFPVVLVGNKADLESQRQVPRSEASAFGASHHVAYFEASAKLRLNVDEAFEQLVRAVRKYQEQELPPSPPSAPRKKGGGCPCVLL.

The segment at 1–30 is disordered; that stretch reads MSSGAASGTGRGRPRGGGPGPGDPPPSETH. Residues 7–20 are compositionally biased toward gly residues; that stretch reads SGTGRGRPRGGGPG. GTP is bound at residue 36 to 44; it reads GGGGVGKSA. Positions 58-66 match the Effector region motif; it reads YDPTIEDSY. GTP is bound by residues 83 to 87, 142 to 145, and 172 to 174; these read DTAGQ, NKAD, and SAK. Cysteine methyl ester is present on C215. C215 carries the S-geranylgeranyl cysteine lipid modification. Positions 216–218 are cleaved as a propeptide — removed in mature form; the sequence is VLL.

The protein belongs to the small GTPase superfamily. Ras family. Interacts with PLCE1. Interacts (active GTP-bound form preferentially) with RGS14. Interacts with OSBPL3. Interacts with ZDHHC19. In terms of processing, S-palmitoylated by ZDHHC19, leading to increased association with membranes and with rafts/caveolae as well as enhanced cell viability.

It is found in the cell membrane. The catalysed reaction is GTP + H2O = GDP + phosphate + H(+). In terms of biological role, GTP-binding protein with GTPase activity, likely involved in the regulation of MAPK signaling pathway and thereby controlling multiple cellular processes. Regulates the organization of the actin cytoskeleton. With OSPBL3, modulates integrin beta-1 (ITGB1) activity. The sequence is that of Ras-related protein R-Ras (RRAS) from Homo sapiens (Human).